The sequence spans 124 residues: MAFKVVVSDSKTGKSYQFETESTALIGKKIGDEISGSVVELEGYKLKITGGSDKCGFAMRHDIHGAMKMRVLLKSGPGYNVKEKGLRRRKSLRGNTISKDITLINTKVVEYGSAPLGGEPESIE.

This sequence belongs to the eukaryotic ribosomal protein eS6 family.

The protein is Small ribosomal subunit protein eS6 of Methanococcus maripaludis (strain C5 / ATCC BAA-1333).